Reading from the N-terminus, the 248-residue chain is Biosynthetic peptidoglycan transglycosylase (248 aa).

The chain crosses the membrane as a helical span at residues 17–37; it reads LLIFFFASTILAVIVYRFMPV.

This sequence belongs to the glycosyltransferase 51 family.

The protein resides in the cell inner membrane. It catalyses the reaction [GlcNAc-(1-&gt;4)-Mur2Ac(oyl-L-Ala-gamma-D-Glu-L-Lys-D-Ala-D-Ala)](n)-di-trans,octa-cis-undecaprenyl diphosphate + beta-D-GlcNAc-(1-&gt;4)-Mur2Ac(oyl-L-Ala-gamma-D-Glu-L-Lys-D-Ala-D-Ala)-di-trans,octa-cis-undecaprenyl diphosphate = [GlcNAc-(1-&gt;4)-Mur2Ac(oyl-L-Ala-gamma-D-Glu-L-Lys-D-Ala-D-Ala)](n+1)-di-trans,octa-cis-undecaprenyl diphosphate + di-trans,octa-cis-undecaprenyl diphosphate + H(+). The protein operates within cell wall biogenesis; peptidoglycan biosynthesis. In terms of biological role, peptidoglycan polymerase that catalyzes glycan chain elongation from lipid-linked precursors. In Bacteroides thetaiotaomicron (strain ATCC 29148 / DSM 2079 / JCM 5827 / CCUG 10774 / NCTC 10582 / VPI-5482 / E50), this protein is Biosynthetic peptidoglycan transglycosylase.